Consider the following 298-residue polypeptide: MKDRIKKLQKEKDVAILAHYYVDGEVQEIADYVGDSFYLAKTATKLKNKTIIMAGVYFMGESIKILNPEKMVHMVDIYADCPMAHMITIKKIKEMREKYDDLAVVCYINSTAEIKAYCDVCITSSNAVKIVSKLKEKNIFIVPDGNLASYITKQVKNKNIILNKGYCCVHNLVHLENVIKLKNEYPNARVLAHPECKEEILNLADYIGSTSGIIEEVLKDGNEFIIVTERGIQHKIYEKAPNKKLYFADTLICKSMKKNTLEKIEKILLDGGDELEVNDEIAKKALIPLEKMLELAGD.

Iminosuccinate-binding residues include histidine 19 and serine 36. Residue cysteine 81 coordinates [4Fe-4S] cluster. Iminosuccinate-binding positions include 107-109 and serine 124; that span reads YIN. Residue cysteine 167 coordinates [4Fe-4S] cluster. Iminosuccinate-binding positions include 193–195 and threonine 210; that span reads HPE. Cysteine 253 provides a ligand contact to [4Fe-4S] cluster.

This sequence belongs to the quinolinate synthase family. Type 2 subfamily. It depends on [4Fe-4S] cluster as a cofactor.

Its subcellular location is the cytoplasm. The catalysed reaction is iminosuccinate + dihydroxyacetone phosphate = quinolinate + phosphate + 2 H2O + H(+). It functions in the pathway cofactor biosynthesis; NAD(+) biosynthesis; quinolinate from iminoaspartate: step 1/1. Catalyzes the condensation of iminoaspartate with dihydroxyacetone phosphate to form quinolinate. The polypeptide is Quinolinate synthase (nadA) (Fusobacterium nucleatum subsp. nucleatum (strain ATCC 25586 / DSM 15643 / BCRC 10681 / CIP 101130 / JCM 8532 / KCTC 2640 / LMG 13131 / VPI 4355)).